The sequence spans 510 residues: GTPase Der (510 aa).

EngA-type G domains follow at residues proline 3–leucine 166 and isoleucine 220–threonine 393. Residues glycine 9–serine 16, aspartate 56–isoleucine 60, asparagine 118–aspartate 121, glycine 226–serine 233, aspartate 273–valine 277, and asparagine 338–aspartate 341 each bind GTP. Residues glutamine 394–asparagine 478 form the KH-like domain.

This sequence belongs to the TRAFAC class TrmE-Era-EngA-EngB-Septin-like GTPase superfamily. EngA (Der) GTPase family. Associates with the 50S ribosomal subunit.

Its function is as follows. GTPase that plays an essential role in the late steps of ribosome biogenesis. This is GTPase Der from Haemophilus ducreyi (strain 35000HP / ATCC 700724).